Consider the following 481-residue polypeptide: Cysteine--tRNA ligase (481 aa).

C29 is a binding site for Zn(2+). The 'HIGH' region motif lies at 31–41 (PTTYDYIHLGN). Positions 209, 234, and 238 each coordinate Zn(2+). A 'KMSKS' region motif is present at residues 267–271 (KMSKS). Residue K270 participates in ATP binding.

The protein belongs to the class-I aminoacyl-tRNA synthetase family. As to quaternary structure, monomer. Requires Zn(2+) as cofactor.

The protein resides in the cytoplasm. The catalysed reaction is tRNA(Cys) + L-cysteine + ATP = L-cysteinyl-tRNA(Cys) + AMP + diphosphate. This is Cysteine--tRNA ligase from Heliobacterium modesticaldum (strain ATCC 51547 / Ice1).